Reading from the N-terminus, the 1308-residue chain is Receptor tyrosine-protein kinase erbB-4 (1308 aa).

A signal peptide spans 1-25 (MKLATGLWVWGSLLMAAGTVQPSAS). Over 26–652 (QSVCAGTENK…TLPQHARTPL (627 aa)) the chain is Extracellular. Cys-29 and Cys-56 are joined by a disulfide. N-linked (GlcNAc...) asparagine glycans are attached at residues Asn-138, Asn-174, and Asn-181. Cystine bridges form between Cys-156–Cys-186, Cys-189–Cys-197, Cys-193–Cys-205, Cys-213–Cys-221, Cys-217–Cys-229, Cys-230–Cys-238, Cys-234–Cys-246, Cys-249–Cys-258, Cys-262–Cys-289, Cys-293–Cys-304, Cys-308–Cys-323, and Cys-326–Cys-330. The N-linked (GlcNAc...) asparagine glycan is linked to Asn-253. N-linked (GlcNAc...) asparagine glycosylation is found at Asn-410, Asn-473, and Asn-495. Disulfide bonds link Cys-503–Cys-512, Cys-507–Cys-520, Cys-523–Cys-532, Cys-536–Cys-552, Cys-555–Cys-569, Cys-559–Cys-577, Cys-580–Cys-589, Cys-593–Cys-614, Cys-617–Cys-625, and Cys-621–Cys-633. N-linked (GlcNAc...) asparagine glycosylation is present at Asn-548. Asn-576 carries an N-linked (GlcNAc...) asparagine glycan. Asn-620 carries an N-linked (GlcNAc...) asparagine glycan. The chain crosses the lipid bilayer at residues 653–673 (IAAGVIGGLFILVIMALTFAV). Topologically, residues 674–1308 (YVRRKSIKKK…PPYRHRNTVV (635 aa)) are cytoplasmic. The Nuclear localization signal signature appears at 676–684 (RRKSIKKKR). The region spanning 718-985 (LKRVKVLGSG…RMARDPQRYL (268 aa)) is the Protein kinase domain. ATP is bound by residues 724–732 (LGSGAFGTV), Lys-751, 797–799 (QLM), and 843–848 (DLAARN). Asp-843 acts as the Proton acceptor in catalysis. 3 positions are modified to phosphotyrosine; by autocatalysis: Tyr-875, Tyr-1035, and Tyr-1056. A PPxy motif 1 motif is present at residues 1032–1035 (PPIY). A disordered region spans residues 1117-1149 (PHVQEDSSTQRYSADPTVFAPERNPRGELDEEG). A phosphotyrosine; by autocatalysis mark is found at Tyr-1150, Tyr-1162, Tyr-1188, Tyr-1202, Tyr-1242, Tyr-1258, and Tyr-1284. Positions 1282–1285 (PEYL) match the PPxY motif 2 motif. A PDZ-binding motif is present at residues 1290-1292 (LKP).

This sequence belongs to the protein kinase superfamily. Tyr protein kinase family. EGF receptor subfamily. Monomer in the absence of bound ligand. Homodimer or heterodimer with another ERBB family member upon ligand binding, thus forming heterotetramers. Interacts with EGFR and ERBB2. Interacts with DLG2 (via its PDZ domain), DLG3 (via its PDZ domain), DLG4 (via its PDZ domain) and SNTB2 (via its PDZ domain). Interacts with MUC1. Interacts (via its PPxy motifs) with WWOX. Interacts (via the PPxY motif 3 of isoform JM-A CYT-2) with YAP1 (via the WW domain 1 of isoform 1). Interacts (isoform JM-A CYT-1 and isoform JM-B CYT-1) with WWP1. Interacts (via its intracellular domain) with TRIM28. Interacts (via the intracellular domains of both CYT-1 and CYT-2 isoforms) with KAP1; the interaction does not phosphorylate KAP1 but represses ERBB4-mediated transcriptional activity. Interacts with PRPU, DDX23, MATR3, RBM15, ILF3, KAP1, U5S1, U2SURP, ITCH, HNRNPU, AP2A1, NULC, LEO1, WWP2, IGHG1, HXK1, GRB7 and SRRT. Interacts (phosphorylated isoform JM-A CYT-1 and isoform JM-B CYT-1) with PIK3R1. Interacts with SHC1. Interacts with GRB2. Interacts (soluble intracellular domain) with BCL2. Interacts (phosphorylated) with STAT1. Interacts with CBFA2T3. Interacts (soluble intracellular domain) with STAT5A. In terms of processing, isoform JM-A CYT-1 and isoform JM-A CYT-2 are processed by ADAM17. Proteolytic processing in response to ligand or 12-O-tetradecanoylphorbol-13-acetate stimulation results in the production of 120 kDa soluble receptor forms and intermediate membrane-anchored 80 kDa fragments (m80HER4), which are further processed by a presenilin-dependent gamma-secretase to release a cytoplasmic intracellular domain (E4ICD; E4ICD1/s80Cyt1 or E4ICD2/s80Cyt2, depending on the isoform). Membrane-anchored 80 kDa fragments of the processed isoform JM-A CYT-1 are more readily degraded by the proteasome than fragments of isoform JM-A CYT-2, suggesting a prevalence of E4ICD2 over E4ICD1. Isoform JM-B CYT-1 and isoform JM-B CYT-2 lack the ADAM17 cleavage site and are not processed by ADAM17, precluding further processing by gamma-secretase. Post-translationally, autophosphorylated on tyrosine residues in response to ligand binding. Autophosphorylation occurs in trans, i.e. one subunit of the dimeric receptor phosphorylates tyrosine residues on the other subunit. Ligands trigger phosphorylation at specific tyrosine residues, thereby creating binding sites for scaffold proteins and effectors. Constitutively phosphorylated at a basal level when overexpressed in heterologous systems; ligand binding leads to increased phosphorylation. Phosphorylation at Tyr-1035 is important for interaction with STAT1. Phosphorylation at Tyr-1056 is important for interaction with PIK3R1. Phosphorylation at Tyr-1242 is important for interaction with SHC1. Phosphorylation at Tyr-1188 may also contribute to the interaction with SHC1. Isoform JM-A CYT-2 is constitutively phosphorylated on tyrosine residues in a ligand-independent manner. E4ICD2 but not E4ICD1 is phosphorylated on tyrosine residues. Ubiquitinated. During mitosis, the ERBB4 intracellular domain is ubiquitinated by the APC/C complex and targeted to proteasomal degradation. Isoform JM-A CYT-1 and isoform JM-B CYT-1 are ubiquitinated by WWP1. The ERBB4 intracellular domain (E4ICD1) is ubiquitinated, and this involves NEDD4. In terms of tissue distribution, isoform JM-A CYT-2 and isoform JM-B CYT-2 are expressed in cerebellum, cerebral cortex, spinal cord, medulla oblongata and eye, but the kidney expresses solely isoform JM-A CYT-2 and the heart solely isoform JM-B CYT-2.

The protein resides in the cell membrane. Its subcellular location is the nucleus. The protein localises to the mitochondrion. It carries out the reaction L-tyrosyl-[protein] + ATP = O-phospho-L-tyrosyl-[protein] + ADP + H(+). With respect to regulation, binding of a cognate ligand leads to dimerization and activation by autophosphorylation on tyrosine residues. In vitro kinase activity is increased by Mg(2+). Functionally, tyrosine-protein kinase that plays an essential role as cell surface receptor for neuregulins and EGF family members and regulates development of the heart, the central nervous system and the mammary gland, gene transcription, cell proliferation, differentiation, migration and apoptosis. Required for normal cardiac muscle differentiation during embryonic development, and for postnatal cardiomyocyte proliferation. Required for normal development of the embryonic central nervous system, especially for normal neural crest cell migration and normal axon guidance. Required for mammary gland differentiation, induction of milk proteins and lactation. Acts as cell-surface receptor for the neuregulins NRG1, NRG2, NRG3 and NRG4 and the EGF family members BTC, EREG and HBEGF. Ligand binding triggers receptor dimerization and autophosphorylation at specific tyrosine residues that then serve as binding sites for scaffold proteins and effectors. Ligand specificity and signaling is modulated by alternative splicing, proteolytic processing, and by the formation of heterodimers with other ERBB family members, thereby creating multiple combinations of intracellular phosphotyrosines that trigger ligand- and context-specific cellular responses. Mediates phosphorylation of SHC1 and activation of the MAP kinases MAPK1/ERK2 and MAPK3/ERK1. Isoform JM-A CYT-1 and isoform JM-B CYT-1 phosphorylate PIK3R1, leading to the activation of phosphatidylinositol 3-kinase and AKT1 and protect cells against apoptosis. Isoform JM-A CYT-1 and isoform JM-B CYT-1 mediate reorganization of the actin cytoskeleton and promote cell migration in response to NRG1. Isoform JM-A CYT-2 and isoform JM-B CYT-2 lack the phosphotyrosine that mediates interaction with PIK3R1, and hence do not phosphorylate PIK3R1, do not protect cells against apoptosis, and do not promote reorganization of the actin cytoskeleton and cell migration. Proteolytic processing of isoform JM-A CYT-1 and isoform JM-A CYT-2 gives rise to the corresponding soluble intracellular domains (4ICD) that translocate to the nucleus, promote nuclear import of STAT5A, activation of STAT5A, mammary epithelium differentiation, cell proliferation and activation of gene expression. The ERBB4 soluble intracellular domains (4ICD) colocalize with STAT5A at the CSN2 promoter to regulate transcription of milk proteins during lactation. The ERBB4 soluble intracellular domains can also translocate to mitochondria and promote apoptosis. In Mus musculus (Mouse), this protein is Receptor tyrosine-protein kinase erbB-4 (Erbb4).